The sequence spans 248 residues: Mannose-binding protein C (248 aa).

Residues 1 to 20 (MSLFPSLPLLLLSMVAASYS) form the signal peptide. Residues 42-99 (GINGFPGKDGRDGTKGEKGEPGQGLRGLQGPPGKLGPPGNPGPSGSPGAKGQKGDPGA) form the Collagen-like domain. The tract at residues 43–112 (INGFPGKDGR…CDSSLANPER (70 aa)) is disordered. The residue at position 47 (Pro47) is a 4-hydroxyproline. The span at 49–61 (KDGRDGTKGEKGE) shows a compositional bias: basic and acidic residues. 4-hydroxyproline occurs at positions 73, 79, 82, and 88. A coiled-coil region spans residues 112–130 (RKTLQTEINRIKKWVTFSL). The C-type lectin domain maps to 134 to 245 (VGKKLFLTNG…CSSSHLVICE (112 aa)). Disulfide bonds link Cys155-Cys244 and Cys222-Cys236.

Oligomeric complex of 3 or more homotrimers. Interacts with MASP1 and MASP2. Interacts with MEP1A and MEP1B and may inhibit their catalytic activity. Post-translationally, hydroxylation on proline residues within the sequence motif, GXPG, is most likely to be 4-hydroxy as this fits the requirement for 4-hydroxylation in vertebrates.

It localises to the secreted. Calcium-dependent lectin involved in innate immune defense. Binds mannose, fucose and N-acetylglucosamine on different microorganisms and activates the lectin complement pathway. Binds to late apoptotic cells, as well as to apoptotic blebs and to necrotic cells, but not to early apoptotic cells, facilitating their uptake by macrophages. The protein is Mannose-binding protein C (MBL2) of Callithrix jacchus (White-tufted-ear marmoset).